Here is a 218-residue protein sequence, read N- to C-terminus: Glycerol-3-phosphate acyltransferase (218 aa).

Helical transmembrane passes span 5–25, 53–73, 80–100, 115–135, and 138–158; these read ALGM…ILIC, LAAA…VWLA, PFYL…PVFF, IAAI…LTVL, and GYSS…VWWF.

This sequence belongs to the PlsY family. In terms of assembly, probably interacts with PlsX.

The protein localises to the cell inner membrane. The enzyme catalyses an acyl phosphate + sn-glycerol 3-phosphate = a 1-acyl-sn-glycero-3-phosphate + phosphate. The protein operates within lipid metabolism; phospholipid metabolism. Catalyzes the transfer of an acyl group from acyl-phosphate (acyl-PO(4)) to glycerol-3-phosphate (G3P) to form lysophosphatidic acid (LPA). This enzyme utilizes acyl-phosphate as fatty acyl donor, but not acyl-CoA or acyl-ACP. The sequence is that of Glycerol-3-phosphate acyltransferase from Proteus mirabilis (strain HI4320).